Consider the following 37-residue polypeptide: Lambda-hexatoxin-Hf1a (37 aa).

Cystine bridges form between Cys-4–Cys-18, Cys-11–Cys-23, Cys-14–Cys-15, and Cys-17–Cys-34.

This sequence belongs to the neurotoxin 11 (kappa toxin) family. Expressed by the venom gland.

It is found in the secreted. This excitatory toxin inhibits insect calcium-activated potassium (KCa) channels (Slo-type). This Hadronyche formidabilis (Northern tree funnel-web spider) protein is Lambda-hexatoxin-Hf1a.